Reading from the N-terminus, the 303-residue chain is Short chain dehydrogenase pigC (303 aa).

7 residues coordinate NADP(+): I45, D103, N130, R164, Y196, K200, and T231. Residue Y196 is the Proton donor of the active site. K200 serves as the catalytic Lowers pKa of active site Tyr.

The protein belongs to the short-chain dehydrogenases/reductases (SDR) family.

The protein operates within secondary metabolite biosynthesis. Functionally, short chain dehydrogenase; part of the gene cluster that mediates the biosynthesis of azaphilone pigments (MonAzPs), a complex mixture of compounds with a common azaphilone skeleton very widely used as food colorants. Within the pathway, pigC intercepts the very reactive benzaldehyde produced by the nrPKS pigA to reduce the omega-1 carbonyl to the alcohol to provide the first stable enzyme-free MonAzPs intermediate, 6-(4-hydroxy-2-oxopentyl)-3-methyl-2,4-dioxocyclohexane carbaldehyde, also known as M7PKS-1. The first step of the pathway is performed by the nrPKS pigA that forms the hexaketide precursor from successive condensations of five malonyl-CoA units, with a simple acetyl-CoA starter unit. The role of esterase pigG is not clear, but it may play at most a supplementary role in the formation of the benzaldehyde produced by the pigA nrPKS. This very reactive benzaldehyde is intercepted by the pigC ketoreductase that to provide the first stable enzyme-free MonAzPs intermediate, M7PKS-1. The FAD-dependent monooxygenase pigN hydroxylates M7PKS-1 at C-4, which triggers the formation of the pyran ring. PigJ, pigK and pigD are involved in the acetylation of the pyran ring. PigJ and pigK form the two subunits of a dedicated fungal FAS that produces the side chain fatty acyl moiety of MonAzPs and pigD transfers the fatty acyl chain to the C-4 alcohol. PigM and pigO are involved in the elimination of the omega-1 alcohol. PigM acts as an O-acetyltransferase that synthesizes the putative O-11 acetyl intermediate whereas pigO eliminates acetic acid to yield an intermediate with a C10(11) double bond. The dehydration of the C-11 alcohol followed by the reduction of the C6(7) double bond by the NAD(P)H-dependent oxidoreductase pigE increases the electrophilicity of the C-5 ketone of the resulting acyl benzopyran. This in turn sets up the C-5 ketone for an intramolecular Knoevenagel aldol condensation with the C-20 enol of the side chain. This condensation affords the characteristic linear tricyclic carbon skeletons of the yellow pigments that serve as the common precursors for the classical yellow pigments monascin and ankaflavin, orange pigments rubopunctatin and monascorubrin, and red pigments ribropunctamine and monascorubramine. The FAD-dependent oxidoreductase pigF is especially invoved in the biosynthesis of orange and red pigments via desaturation of C6(7). This Monascus ruber (Mold) protein is Short chain dehydrogenase pigC.